The following is a 154-amino-acid chain: Small ribosomal subunit protein eS10 (154 aa).

Positions 91 to 154 are disordered; it reads ATMKKQASRP…ERSAPAPQQN (64 aa). Positions 124–135 are enriched in basic and acidic residues; sequence RGDRRQGGDRRG.

The protein belongs to the eukaryotic ribosomal protein eS10 family.

The protein localises to the cytoplasm. The chain is Small ribosomal subunit protein eS10 (rps10) from Dictyostelium discoideum (Social amoeba).